The chain runs to 176 residues: Lipocalin-1 (176 aa).

The first 19 residues, 1 to 19 (MMRALLLAIGLGLVAALQA), serve as a signal peptide directing secretion. A disulfide bridge links Cys-80 with Cys-171.

This sequence belongs to the calycin superfamily. Lipocalin family. As to quaternary structure, predominantly monomer. May form homodimer. Interacts with LMBR1L; this interaction mediates the endocytosis of LCN1.

The protein localises to the secreted. Could play a role in taste reception. Could be necessary for the concentration and delivery of sapid molecules in the gustatory system. Can bind various ligands, with chemical structures ranging from lipids and retinoids to the macrocyclic antibiotic rifampicin and even to microbial siderophores. Exhibits an extremely wide ligand pocket. The polypeptide is Lipocalin-1 (LCN1) (Sus scrofa (Pig)).